The following is a 275-amino-acid chain: NH(3)-dependent NAD(+) synthetase (275 aa).

50–57 lines the ATP pocket; that stretch reads GISGGVDS. Mg(2+) is bound at residue Asp-56. A deamido-NAD(+)-binding site is contributed by Arg-147. Thr-167 contributes to the ATP binding site. A Mg(2+)-binding site is contributed by Glu-172. Deamido-NAD(+) is bound by residues Lys-180 and Asp-187. ATP is bound by residues Lys-196 and Thr-218. 267-268 provides a ligand contact to deamido-NAD(+); that stretch reads HK.

This sequence belongs to the NAD synthetase family. In terms of assembly, homodimer.

It carries out the reaction deamido-NAD(+) + NH4(+) + ATP = AMP + diphosphate + NAD(+) + H(+). It participates in cofactor biosynthesis; NAD(+) biosynthesis; NAD(+) from deamido-NAD(+) (ammonia route): step 1/1. In terms of biological role, catalyzes the ATP-dependent amidation of deamido-NAD to form NAD. Uses ammonia as a nitrogen source. The chain is NH(3)-dependent NAD(+) synthetase from Pseudomonas syringae pv. tomato (strain ATCC BAA-871 / DC3000).